The chain runs to 150 residues: Large ribosomal subunit protein bL9 (150 aa).

It belongs to the bacterial ribosomal protein bL9 family.

In terms of biological role, binds to the 23S rRNA. The protein is Large ribosomal subunit protein bL9 of Shewanella putrefaciens (strain CN-32 / ATCC BAA-453).